The following is a 233-amino-acid chain: Biosynthetic peptidoglycan transglycosylase (233 aa).

A helical membrane pass occupies residues 17-37 (IVLAVLALVVLPYVLIFFYLL).

Belongs to the glycosyltransferase 51 family.

Its subcellular location is the cell inner membrane. It catalyses the reaction [GlcNAc-(1-&gt;4)-Mur2Ac(oyl-L-Ala-gamma-D-Glu-L-Lys-D-Ala-D-Ala)](n)-di-trans,octa-cis-undecaprenyl diphosphate + beta-D-GlcNAc-(1-&gt;4)-Mur2Ac(oyl-L-Ala-gamma-D-Glu-L-Lys-D-Ala-D-Ala)-di-trans,octa-cis-undecaprenyl diphosphate = [GlcNAc-(1-&gt;4)-Mur2Ac(oyl-L-Ala-gamma-D-Glu-L-Lys-D-Ala-D-Ala)](n+1)-di-trans,octa-cis-undecaprenyl diphosphate + di-trans,octa-cis-undecaprenyl diphosphate + H(+). Its pathway is cell wall biogenesis; peptidoglycan biosynthesis. Its function is as follows. Peptidoglycan polymerase that catalyzes glycan chain elongation from lipid-linked precursors. The protein is Biosynthetic peptidoglycan transglycosylase of Rhizobium etli (strain ATCC 51251 / DSM 11541 / JCM 21823 / NBRC 15573 / CFN 42).